Here is a 399-residue protein sequence, read N- to C-terminus: Stearoyl-[acyl-carrier-protein] 9-desaturase, seed specific, chloroplastic (399 aa).

The transit peptide at 1–34 (MALKFNPLVSQPYKLASSARPPVSTFRSPKFLCL) directs the protein to the chloroplast. 6 residues coordinate Fe cation: E141, E179, H182, E232, E265, and H268.

Belongs to the fatty acid desaturase type 2 family. As to quaternary structure, homodimer. It depends on Fe(2+) as a cofactor. In terms of tissue distribution, developing seeds.

It localises to the plastid. The protein localises to the chloroplast. It catalyses the reaction octadecanoyl-[ACP] + 2 reduced [2Fe-2S]-[ferredoxin] + O2 + 2 H(+) = (9Z)-octadecenoyl-[ACP] + 2 oxidized [2Fe-2S]-[ferredoxin] + 2 H2O. The protein operates within lipid metabolism; fatty acid metabolism. Converts stearoyl-ACP to oleoyl-ACP by introduction of a cis double bond between carbons Delta(9) and Delta(10) of the acyl chain. The sequence is that of Stearoyl-[acyl-carrier-protein] 9-desaturase, seed specific, chloroplastic from Brassica napus (Rape).